A 551-amino-acid polypeptide reads, in one-letter code: Methionine--tRNA ligase (551 aa).

The 'HIGH' region signature appears at 12–22 (PYANGPLHFGH). Cys144, Cys147, Cys157, and Cys160 together coordinate Zn(2+). A 'KMSKS' region motif is present at residues 330-334 (QFSKS). Lys333 contributes to the ATP binding site.

It belongs to the class-I aminoacyl-tRNA synthetase family. MetG type 1 subfamily. Monomer. The cofactor is Zn(2+).

The protein localises to the cytoplasm. It catalyses the reaction tRNA(Met) + L-methionine + ATP = L-methionyl-tRNA(Met) + AMP + diphosphate. Functionally, is required not only for elongation of protein synthesis but also for the initiation of all mRNA translation through initiator tRNA(fMet) aminoacylation. The polypeptide is Methionine--tRNA ligase (Chlamydia abortus (strain DSM 27085 / S26/3) (Chlamydophila abortus)).